A 62-amino-acid polypeptide reads, in one-letter code: MTIAFQLAVFALIVTSSVLVISVPLVFASPDGWSNNKNVVFSGTSLWIGLVFLVAILNSLIS.

A run of 2 helical transmembrane segments spans residues 8 to 28 (AVFALIVTSSVLVISVPLVFA) and 41 to 61 (FSGTSLWIGLVFLVAILNSLI).

This sequence belongs to the PsbZ family. PSII is composed of 1 copy each of membrane proteins PsbA, PsbB, PsbC, PsbD, PsbE, PsbF, PsbH, PsbI, PsbJ, PsbK, PsbL, PsbM, PsbT, PsbY, PsbZ, Psb30/Ycf12, at least 3 peripheral proteins of the oxygen-evolving complex and a large number of cofactors. It forms dimeric complexes.

The protein resides in the plastid. It is found in the chloroplast thylakoid membrane. In terms of biological role, may control the interaction of photosystem II (PSII) cores with the light-harvesting antenna, regulates electron flow through the 2 photosystem reaction centers. PSII is a light-driven water plastoquinone oxidoreductase, using light energy to abstract electrons from H(2)O, generating a proton gradient subsequently used for ATP formation. The chain is Photosystem II reaction center protein Z from Oryza nivara (Indian wild rice).